The following is a 353-amino-acid chain: AA9 family lytic polysaccharide monooxygenase A (353 aa).

The N-terminal stretch at 1 to 19 is a signal peptide; that stretch reads MKSTFGLLALAAAAKMAHA. Cu(2+) contacts are provided by His20 and His102. A disulfide bond links Cys62 and Cys183. His169 serves as a coordination point for O2. Tyr180 contributes to the Cu(2+) binding site. The segment covering 266-276 has biased composition (low complexity); sequence KPTTTTAAAPA. The interval 266–316 is disordered; it reads KPTTTTAAAPAETDSCDGDDDDYETETPAPQASATQAPAPQRPAPQTPSGS. The segment covering 279–290 has biased composition (acidic residues); sequence DSCDGDDDDYET. Over residues 291-304 the composition is skewed to low complexity; that stretch reads ETPAPQASATQAPA. A CBM1 domain is found at 315–351; it reads GSVKEWYQCGGINYTGAKNCESGLVCKEWNPYYHQCI. Residue Asn327 is glycosylated (N-linked (GlcNAc...) asparagine).

Belongs to the polysaccharide monooxygenase AA9 family. The cofactor is Cu(2+).

The protein resides in the secreted. It catalyses the reaction [(1-&gt;4)-beta-D-glucosyl]n+m + reduced acceptor + O2 = 4-dehydro-beta-D-glucosyl-[(1-&gt;4)-beta-D-glucosyl]n-1 + [(1-&gt;4)-beta-D-glucosyl]m + acceptor + H2O.. In terms of biological role, lytic polysaccharide monooxygenase (LPMO) that depolymerizes crystalline and amorphous polysaccharides via the oxidation of scissile alpha- or beta-(1-4)-glycosidic bonds, yielding C4 oxidation products. Catalysis by LPMOs requires the reduction of the active-site copper from Cu(II) to Cu(I) by a reducing agent and H(2)O(2) or O(2) as a cosubstrate. The chain is AA9 family lytic polysaccharide monooxygenase A (eglD) from Aspergillus clavatus (strain ATCC 1007 / CBS 513.65 / DSM 816 / NCTC 3887 / NRRL 1 / QM 1276 / 107).